A 59-amino-acid chain; its full sequence is Large ribosomal subunit protein uL30 (59 aa).

This sequence belongs to the universal ribosomal protein uL30 family. As to quaternary structure, part of the 50S ribosomal subunit.

The chain is Large ribosomal subunit protein uL30 from Bacillus subtilis (strain 168).